Reading from the N-terminus, the 120-residue chain is Glycine cleavage system H protein (120 aa).

Residues 17-99 (VATVGITNYA…QGAGWFFKLK (83 aa)) form the Lipoyl-binding domain. The residue at position 58 (Lys58) is an N6-lipoyllysine.

Belongs to the GcvH family. In terms of assembly, the glycine cleavage system is composed of four proteins: P, T, L and H. (R)-lipoate is required as a cofactor.

The glycine cleavage system catalyzes the degradation of glycine. The H protein shuttles the methylamine group of glycine from the P protein to the T protein. The sequence is that of Glycine cleavage system H protein from Rhizobium etli (strain ATCC 51251 / DSM 11541 / JCM 21823 / NBRC 15573 / CFN 42).